A 156-amino-acid polypeptide reads, in one-letter code: Cyclic pyranopterin monophosphate synthase (156 aa).

Substrate-binding positions include 75-77 and 111-112; these read LCH and ME. D126 is an active-site residue.

The protein belongs to the MoaC family. As to quaternary structure, homohexamer; trimer of dimers.

The enzyme catalyses (8S)-3',8-cyclo-7,8-dihydroguanosine 5'-triphosphate = cyclic pyranopterin phosphate + diphosphate. It participates in cofactor biosynthesis; molybdopterin biosynthesis. Catalyzes the conversion of (8S)-3',8-cyclo-7,8-dihydroguanosine 5'-triphosphate to cyclic pyranopterin monophosphate (cPMP). The chain is Cyclic pyranopterin monophosphate synthase from Erythrobacter litoralis (strain HTCC2594).